Here is a 138-residue protein sequence, read N- to C-terminus: Ribosome-binding factor A (138 aa).

The protein belongs to the RbfA family. Monomer. Binds 30S ribosomal subunits, but not 50S ribosomal subunits or 70S ribosomes.

The protein resides in the cytoplasm. Functionally, one of several proteins that assist in the late maturation steps of the functional core of the 30S ribosomal subunit. Associates with free 30S ribosomal subunits (but not with 30S subunits that are part of 70S ribosomes or polysomes). Required for efficient processing of 16S rRNA. May interact with the 5'-terminal helix region of 16S rRNA. In Pseudoalteromonas atlantica (strain T6c / ATCC BAA-1087), this protein is Ribosome-binding factor A.